The following is a 226-amino-acid chain: Potassium/proton antiporter CemA (226 aa).

Transmembrane regions (helical) follow at residues 7–27 (FTSLPYLASIVFLPWWISLSF), 111–131 (IICFAILSGYSILGNEGLFIL), and 186–206 (IISGLVSTFPVILDTILKYWI).

Belongs to the CemA family.

The protein localises to the plastid. The protein resides in the chloroplast inner membrane. It carries out the reaction K(+)(in) + H(+)(out) = K(+)(out) + H(+)(in). Contributes to K(+)/H(+) antiport activity by supporting proton efflux to control proton extrusion and homeostasis in chloroplasts in a light-dependent manner to modulate photosynthesis. Prevents excessive induction of non-photochemical quenching (NPQ) under continuous-light conditions. Indirectly promotes efficient inorganic carbon uptake into chloroplasts. This Buxus microphylla (Littleleaf boxwood) protein is Potassium/proton antiporter CemA.